Here is a 202-residue protein sequence, read N- to C-terminus: MTITMIDMEVYLVDENLSIKNAGLSHGYSCGCILKLDITSPKKVKMLVITKVTSFQAIQELKPLNAKLNGSDLDTELVKCYNTTTDLTVYKTSAYHRDMPDKEYCVTRIYSVMANIDSKSTIEFYGTTSDEFLSAYPVIYINPEEKYYKVKNKGRLQMRVITPILNSDKLQFMAKGDMYAGVGDDPSIVDSSDSDEETDYDY.

Belongs to the poxviridae C7 protein family.

Plays a role for multiplication of the virus in different cell types. The protein is Probable host range protein 2-2 of Oryctolagus cuniculus (Rabbit).